The sequence spans 523 residues: 2-isopropylmalate synthase (523 aa).

The Pyruvate carboxyltransferase domain occupies 5 to 267; the sequence is VIIFDTTLRD…ETGINAKEIH (263 aa). Mn(2+)-binding residues include D14, H202, H204, and N238. The tract at residues 392–523 is regulatory domain; sequence QLKQLVVHSD…QQKARSLGGV (132 aa).

It belongs to the alpha-IPM synthase/homocitrate synthase family. LeuA type 1 subfamily. Homodimer. Mn(2+) serves as cofactor.

It is found in the cytoplasm. It catalyses the reaction 3-methyl-2-oxobutanoate + acetyl-CoA + H2O = (2S)-2-isopropylmalate + CoA + H(+). Its pathway is amino-acid biosynthesis; L-leucine biosynthesis; L-leucine from 3-methyl-2-oxobutanoate: step 1/4. Its function is as follows. Catalyzes the condensation of the acetyl group of acetyl-CoA with 3-methyl-2-oxobutanoate (2-ketoisovalerate) to form 3-carboxy-3-hydroxy-4-methylpentanoate (2-isopropylmalate). The chain is 2-isopropylmalate synthase from Shewanella woodyi (strain ATCC 51908 / MS32).